The sequence spans 213 residues: Thiamine-phosphate synthase (213 aa).

Residues 40 to 44 (QFREK) and Asn75 contribute to the 4-amino-2-methyl-5-(diphosphooxymethyl)pyrimidine site. 2 residues coordinate Mg(2+): Asp76 and Asp95. Ser113 is a binding site for 4-amino-2-methyl-5-(diphosphooxymethyl)pyrimidine. 139 to 141 (TPS) is a 2-[(2R,5Z)-2-carboxy-4-methylthiazol-5(2H)-ylidene]ethyl phosphate binding site. Lys142 serves as a coordination point for 4-amino-2-methyl-5-(diphosphooxymethyl)pyrimidine. 2-[(2R,5Z)-2-carboxy-4-methylthiazol-5(2H)-ylidene]ethyl phosphate is bound by residues Gly171 and 191 to 192 (IS).

It belongs to the thiamine-phosphate synthase family. It depends on Mg(2+) as a cofactor.

It carries out the reaction 2-[(2R,5Z)-2-carboxy-4-methylthiazol-5(2H)-ylidene]ethyl phosphate + 4-amino-2-methyl-5-(diphosphooxymethyl)pyrimidine + 2 H(+) = thiamine phosphate + CO2 + diphosphate. It catalyses the reaction 2-(2-carboxy-4-methylthiazol-5-yl)ethyl phosphate + 4-amino-2-methyl-5-(diphosphooxymethyl)pyrimidine + 2 H(+) = thiamine phosphate + CO2 + diphosphate. The enzyme catalyses 4-methyl-5-(2-phosphooxyethyl)-thiazole + 4-amino-2-methyl-5-(diphosphooxymethyl)pyrimidine + H(+) = thiamine phosphate + diphosphate. It functions in the pathway cofactor biosynthesis; thiamine diphosphate biosynthesis; thiamine phosphate from 4-amino-2-methyl-5-diphosphomethylpyrimidine and 4-methyl-5-(2-phosphoethyl)-thiazole: step 1/1. Condenses 4-methyl-5-(beta-hydroxyethyl)thiazole monophosphate (THZ-P) and 2-methyl-4-amino-5-hydroxymethyl pyrimidine pyrophosphate (HMP-PP) to form thiamine monophosphate (TMP). The chain is Thiamine-phosphate synthase from Staphylococcus aureus (strain JH1).